Consider the following 339-residue polypeptide: N-acetyl-gamma-glutamyl-phosphate reductase (339 aa).

C144 is an active-site residue.

It belongs to the NAGSA dehydrogenase family. Type 1 subfamily.

The protein localises to the cytoplasm. The catalysed reaction is N-acetyl-L-glutamate 5-semialdehyde + phosphate + NADP(+) = N-acetyl-L-glutamyl 5-phosphate + NADPH + H(+). It functions in the pathway amino-acid biosynthesis; L-arginine biosynthesis; N(2)-acetyl-L-ornithine from L-glutamate: step 3/4. Its function is as follows. Catalyzes the NADPH-dependent reduction of N-acetyl-5-glutamyl phosphate to yield N-acetyl-L-glutamate 5-semialdehyde. This Methanobrevibacter smithii (strain ATCC 35061 / DSM 861 / OCM 144 / PS) protein is N-acetyl-gamma-glutamyl-phosphate reductase.